Consider the following 209-residue polypeptide: Octanoyltransferase (209 aa).

The region spanning 30-209 is the BPL/LPL catalytic domain; sequence GEAPEAVYLV…LEVEFIKIFK (180 aa). Substrate-binding positions include 69 to 76, 143 to 145, and 156 to 158; these read RGGKFTFH, AIG, and GIA. Cys-174 (acyl-thioester intermediate) is an active-site residue.

It belongs to the LipB family.

The protein localises to the cytoplasm. The catalysed reaction is octanoyl-[ACP] + L-lysyl-[protein] = N(6)-octanoyl-L-lysyl-[protein] + holo-[ACP] + H(+). The protein operates within protein modification; protein lipoylation via endogenous pathway; protein N(6)-(lipoyl)lysine from octanoyl-[acyl-carrier-protein]: step 1/2. Functionally, catalyzes the transfer of endogenously produced octanoic acid from octanoyl-acyl-carrier-protein onto the lipoyl domains of lipoate-dependent enzymes. Lipoyl-ACP can also act as a substrate although octanoyl-ACP is likely to be the physiological substrate. This chain is Octanoyltransferase, found in Rickettsia bellii (strain OSU 85-389).